The sequence spans 467 residues: Coiled-coil domain-containing protein 174 (467 aa).

Disordered stretches follow at residues 40–77 (VFGK…EEQK) and 124–162 (EMEA…SEEW). The stretch at 63–99 (NRAEKDAEQKIEEQKTLDKAREKLEEKAKLYEKMTKG) forms a coiled coil. 2 stretches are compositionally biased toward basic and acidic residues: residues 64-77 (RAEK…EEQK) and 124-139 (EMEA…KAGE). Residue Ser197 is modified to Phosphoserine. Residues 267-309 (LEMLREQTTDQRTKRENIKEKRKAILEARLAKLRQKKMKKSKE) adopt a coiled-coil conformation. Disordered stretches follow at residues 299-363 (LRQK…HIRE) and 378-453 (RQSD…TVTF). Over residues 324 to 336 (PLPPEPEAVPTPR) the composition is skewed to pro residues. Basic and acidic residues-rich tracts occupy residues 348 to 363 (VQER…HIRE) and 378 to 389 (RQSDLRAERDPE). A compositionally biased stretch (polar residues) spans 425-437 (PDQSHGPSPEHTS). Positions 439–448 (TPAPDNPPQA) are enriched in pro residues.

As to expression, widely expressed.

It localises to the nucleus. Functionally, probably involved in neuronal development. In Homo sapiens (Human), this protein is Coiled-coil domain-containing protein 174 (CCDC174).